A 226-amino-acid chain; its full sequence is MSAVAYELLSTTAVISTVFQFLSGAMICRKYIQKKSTGDSSGVPFICGFLSCSFWLRYGVLTEEQSIVLVNIIGSTLFLIYTLIYYVFTVNKRAFVRQFAFVLAVLIAVVVVYTNRLADQRDEMIRITGIFCCIVTVCFFAAPLATLLHVIRAKNSESLPLPLIATSFLVSLQWLIYGILISDSFIQIPNFLGCLLSMLQLSLFVVYPPRSYSGQGYKLVEQAVPF.

A run of 7 helical transmembrane segments spans residues Leu-8–Cys-28, Gly-42–Thr-62, Ile-67–Val-87, Ala-94–Thr-114, Ile-127–Leu-147, Leu-161–Ile-181, and Phe-185–Val-205. The MtN3/slv 1 domain occupies Leu-8–Lys-92. The MtN3/slv 2 domain maps to Gly-129–Arg-210.

This sequence belongs to the SWEET sugar transporter family.

It is found in the golgi apparatus membrane. The protein localises to the cell membrane. Functionally, mediates both low-affinity uptake and efflux of sugar across the membrane. This is Sugar transporter SWEET1 (slv) from Drosophila pseudoobscura pseudoobscura (Fruit fly).